Consider the following 215-residue polypeptide: FGFR1 oncogene partner 2 homolog (215 aa).

A coiled-coil region spans residues 12-186 (AKELVERLRE…REILQITKIS (175 aa)). A disordered region spans residues 193 to 215 (EDASENSPHSAPVPNTDLILRKS).

This sequence belongs to the SIKE family.

Its subcellular location is the cytoplasm. This is FGFR1 oncogene partner 2 homolog (fgfr1op2) from Xenopus laevis (African clawed frog).